Reading from the N-terminus, the 190-residue chain is Imidazoleglycerol-phosphate dehydratase (190 aa).

The protein belongs to the imidazoleglycerol-phosphate dehydratase family.

The protein localises to the cytoplasm. The catalysed reaction is D-erythro-1-(imidazol-4-yl)glycerol 3-phosphate = 3-(imidazol-4-yl)-2-oxopropyl phosphate + H2O. Its pathway is amino-acid biosynthesis; L-histidine biosynthesis; L-histidine from 5-phospho-alpha-D-ribose 1-diphosphate: step 6/9. This Nitratiruptor sp. (strain SB155-2) protein is Imidazoleglycerol-phosphate dehydratase.